Here is a 679-residue protein sequence, read N- to C-terminus: Single-strand DNA endonuclease ASTE1 (679 aa).

The segment at 351 to 400 is interaction with SHLD2; sequence TILPTQVENMQQPNAHRISQPIRQIIYGLLLNASPHLDKTSWNALPPQPL. Positions 625 to 645 are disordered; the sequence is RSNSKKKRQKKQNTSCSKNRG. Residues 626 to 635 show a composition bias toward basic residues; the sequence is SNSKKKRQKK.

It belongs to the asteroid family. In terms of assembly, interacts with SHLD1, SHLD2, SHLD3, RIF1 and MAD2L2/REV7.

Functionally, structure-specific DNA endonuclease that specifically cleaves single-stranded DNA and 3' overhang DNA. Contributes to the control of DNA double-strand break repair choice by antagonizing BRCA1-dependent homologous recombination (HR) and promoting non-homologous end-joining (NHEJ). Recruited to the single-stranded DNA ends by SHLD2 and cleaves the 3' exposed DNA ends, therefore inhibiting DNA end resection (necessary for HR) and promoting DNA end protection (necessary for NHEJ). The protein is Single-strand DNA endonuclease ASTE1 (ASTE1) of Homo sapiens (Human).